The primary structure comprises 335 residues: N-acetyl-gamma-glutamyl-phosphate reductase (335 aa).

The active site involves Cys147.

Belongs to the NAGSA dehydrogenase family. Type 1 subfamily.

Its subcellular location is the cytoplasm. It catalyses the reaction N-acetyl-L-glutamate 5-semialdehyde + phosphate + NADP(+) = N-acetyl-L-glutamyl 5-phosphate + NADPH + H(+). Its pathway is amino-acid biosynthesis; L-arginine biosynthesis; N(2)-acetyl-L-ornithine from L-glutamate: step 3/4. Functionally, catalyzes the NADPH-dependent reduction of N-acetyl-5-glutamyl phosphate to yield N-acetyl-L-glutamate 5-semialdehyde. In Campylobacter hominis (strain ATCC BAA-381 / DSM 21671 / CCUG 45161 / LMG 19568 / NCTC 13146 / CH001A), this protein is N-acetyl-gamma-glutamyl-phosphate reductase.